A 126-amino-acid chain; its full sequence is Glycine cleavage system H protein (126 aa).

One can recognise a Lipoyl-binding domain in the interval 22–104 (VAIIGITEYA…YEKAWMVKVE (83 aa)). At K63 the chain carries N6-lipoyllysine.

Belongs to the GcvH family. The glycine cleavage system is composed of four proteins: P, T, L and H. Requires (R)-lipoate as cofactor.

Its function is as follows. The glycine cleavage system catalyzes the degradation of glycine. The H protein shuttles the methylamine group of glycine from the P protein to the T protein. Is also involved in protein lipoylation via its role as an octanoyl/lipoyl carrier protein intermediate. This Staphylococcus aureus (strain USA300) protein is Glycine cleavage system H protein.